Here is a 241-residue protein sequence, read N- to C-terminus: Venom nerve growth factor 2 (241 aa).

The N-terminal stretch at 1–18 (MSMLCYTLITAFLIGIWA) is a signal peptide. The propeptide occupies 19–125 (APKSEDNVPL…SLNRNIRAKR (107 aa)). The interval 47–67 (GLKTSRNTDQRHPAPQKAEDQ) is disordered. 3 cysteine pairs are disulfide-bonded: Cys-139-Cys-203, Cys-181-Cys-231, and Cys-191-Cys-233.

The protein belongs to the NGF-beta family. Homodimer; non-covalently linked. In terms of tissue distribution, expressed by the venom gland.

Its subcellular location is the secreted. In terms of biological role, nerve growth factor is important for the development and maintenance of the sympathetic and sensory nervous systems. It stimulates division and differentiation of sympathetic and embryonic sensory neurons as well as basal forebrain cholinergic neurons in the brain. Its relevance in the snake venom is not clear. However, it has been shown to inhibit metalloproteinase-dependent proteolysis of platelet glycoprotein Ib alpha, suggesting a metalloproteinase inhibition to prevent metalloprotease autodigestion and/or protection against prey proteases. Binds a lipid between the two protein chains in the homodimer. The lipid-bound form promotes histamine relase from mouse mast cells, contrary to the lipid-free form. This Naja sputatrix (Malayan spitting cobra) protein is Venom nerve growth factor 2.